The sequence spans 203 residues: Octanoyltransferase (203 aa).

In terms of domain architecture, BPL/LPL catalytic spans 32-203 (ISTPDEIWLV…LMHKIREIFS (172 aa)). Substrate contacts are provided by residues 71-78 (RGGKITYH), 138-140 (SLG), and 151-153 (GMA). Cys169 (acyl-thioester intermediate) is an active-site residue.

The protein belongs to the LipB family.

Its subcellular location is the cytoplasm. The catalysed reaction is octanoyl-[ACP] + L-lysyl-[protein] = N(6)-octanoyl-L-lysyl-[protein] + holo-[ACP] + H(+). It functions in the pathway protein modification; protein lipoylation via endogenous pathway; protein N(6)-(lipoyl)lysine from octanoyl-[acyl-carrier-protein]: step 1/2. Functionally, catalyzes the transfer of endogenously produced octanoic acid from octanoyl-acyl-carrier-protein onto the lipoyl domains of lipoate-dependent enzymes. Lipoyl-ACP can also act as a substrate although octanoyl-ACP is likely to be the physiological substrate. This Buchnera aphidicola subsp. Baizongia pistaciae (strain Bp) protein is Octanoyltransferase.